A 510-amino-acid chain; its full sequence is Protein PLASTID TRANSCRIPTIONALLY ACTIVE 16, chloroplastic (510 aa).

A compositionally biased stretch (polar residues) spans 1–14 (MASSSTSFPLTTAP). The transit peptide at 1–19 (MASSSTSFPLTTAPPQGVR) directs the protein to the chloroplast. Disordered regions lie at residues 1–24 (MASS…NRRK) and 38–58 (LGKT…NPFQ). Positions 41 to 51 (TKGDDDSEGKQ) are enriched in basic and acidic residues. 94–123 (IFVAGATGQAGIRIAQTLLQRGFSVRAGVP) serves as a coordination point for NADP(+). The stretch at 354–403 (ARERAEEEAKVAADKAREAAEAAKEFEKQMQKLSEKEAEAASLAEDAQQK) forms a coiled coil. Residue S395 is modified to Phosphoserine. T451 is modified (phosphothreonine; by STN7). Residues 453–493 (RGQAKARNLPPKKAVVKQRPSSPFASKPKEERPKKPEKEVR) are disordered. The span at 479–493 (KPKEERPKKPEKEVR) shows a compositional bias: basic and acidic residues.

It belongs to the NAD(P)-dependent epimerase/dehydratase family. Component of the plastid transcriptionally active chromosome required for plastid gene expression. Interacts with DEGP1 under high light conditions and maybe its degradation target. Post-translationally, excluded from chloroplast nucleoid when phosphorylated on Thr-451 by STN7 that may regulate membrane-anchoring functions of the nucleoid.

The protein localises to the plastid. It localises to the chloroplast stroma. The protein resides in the chloroplast nucleoid. Its subcellular location is the chloroplast thylakoid membrane. Its function is as follows. Probably involved in the regulation of plastid gene expression. The chain is Protein PLASTID TRANSCRIPTIONALLY ACTIVE 16, chloroplastic from Arabidopsis thaliana (Mouse-ear cress).